We begin with the raw amino-acid sequence, 1116 residues long: uncharacterized protein (1116 aa).

EF-hand domains lie at 8–43 (EEQTAFDQLFKIADKQDIGVITGEEAVPFLEKSGLA), 42–77 (LAPQVLGQIWQIADAENRGFLTFSGFVIAMRLVALA), 166–201 (LSTEILARVWNLVDTHKRGALDIREFNTGMHIINLL), and 292–327 (LPEDVLAQIWDLSDTNSNGKLNIGEFCISLYLIKLK). 3 EH domains span residues 9-106 (EQTA…DSSK), 134-224 (EMTR…AAST), and 259-348 (DLTS…VAPL). Residues Asp-305, Asn-307, Asn-309, Lys-311, and Glu-316 each coordinate Ca(2+). 7 disordered regions span residues 360 to 454 (PSVV…NSPT), 703 to 774 (SVNL…ASTV), 812 to 890 (TSLS…NTSA), 909 to 978 (PFAT…SPQI), 1004 to 1024 (TTTHVQHPNSETIPSSTENQY), 1044 to 1066 (SNEVSQPFDFDTANESDNDDDEL), and 1095 to 1116 (QAAEIKDDDNSSTDEEEHAGHH). The segment covering 371–381 (NPNPTLAPNPT) has biased composition (pro residues). Residues 401–416 (FSPTLAPQHTSSNATK) are compositionally biased toward polar residues. The stretch at 565–707 (KAQTEQVNRE…EDGLKSVNLT (143 aa)) forms a coiled coil. A compositionally biased stretch (polar residues) spans 723–749 (SFTSNGITTDKPTLPDTTSSVPTQHNS). Composition is skewed to low complexity over residues 755–774 (NTLRSPSLNSNNSSAHASTV) and 812–827 (TSLSVNNSSVNPSLDS). Polar residues predominate over residues 864 to 890 (SKLTGSARNTAEPVENTSAEPIENTSA). The span at 957 to 969 (EIDDDESSSDEEP) shows a compositional bias: acidic residues. 2 stretches are compositionally biased toward acidic residues: residues 1055–1066 (TANESDNDDDEL) and 1104–1116 (NSSTDEEEHAGHH).

The protein localises to the cytoplasm. Its subcellular location is the cytoskeleton. This is an uncharacterized protein from Schizosaccharomyces pombe (strain 972 / ATCC 24843) (Fission yeast).